Reading from the N-terminus, the 387-residue chain is Probable inactive shikimate kinase like 2, chloroplastic (387 aa).

Residues 1–71 constitute a chloroplast transit peptide; the sequence is MAAFASGLAI…FNSFSCNCLS (71 aa). The tract at residues 368-387 is disordered; that stretch reads NIKPPGWDPSSDTGPHPQFT.

Belongs to the shikimate kinase family.

The protein resides in the plastid. Its subcellular location is the chloroplast. This chain is Probable inactive shikimate kinase like 2, chloroplastic (SKL2), found in Arabidopsis thaliana (Mouse-ear cress).